Consider the following 234-residue polypeptide: Golgi SNAP receptor complex member 1 (234 aa).

Residues 1–212 (MSETWEALRK…MQKIKTKKQK (212 aa)) are Cytoplasmic-facing. Residues 54–121 (VTTEIEGLIE…RDNVDQVLQR (68 aa)) adopt a coiled-coil conformation. Residues 213–233 (NTLILAAVISSCLIFTIFWII) form a helical; Anchor for type IV membrane protein membrane-spanning segment. A topological domain (vesicular) is located at residue asparagine 234.

This sequence belongs to the GOSR1 family. In terms of assembly, component of several multiprotein Golgi SNARE complexes.

The protein localises to the golgi apparatus membrane. Functionally, involved in transport from the ER to the Golgi apparatus as well as in intra-Golgi transport. It belongs to a super-family of proteins called t-SNAREs or soluble NSF (N-ethylmaleimide-sensitive factor) attachment protein receptor. Cooperates with ykt-6 for proper expression of Golgi-resident proteins. Required along with ykt-6 for normal embryonic development, seam cell division or differentiation, and ray formation. The protein is Golgi SNAP receptor complex member 1 (gos-28) of Caenorhabditis elegans.